The sequence spans 83 residues: Small ribosomal subunit protein uS17 (83 aa).

It belongs to the universal ribosomal protein uS17 family. In terms of assembly, part of the 30S ribosomal subunit.

Its function is as follows. One of the primary rRNA binding proteins, it binds specifically to the 5'-end of 16S ribosomal RNA. This Ehrlichia chaffeensis (strain ATCC CRL-10679 / Arkansas) protein is Small ribosomal subunit protein uS17.